Here is a 62-residue protein sequence, read N- to C-terminus: Sperm protamine P1 (62 aa).

A disordered region spans residues 1-62 (MARYRRHSRS…RYSRRGRRRY (62 aa)).

The protein belongs to the protamine P1 family. Testis.

It is found in the nucleus. Its subcellular location is the chromosome. Its function is as follows. Protamines substitute for histones in the chromatin of sperm during the haploid phase of spermatogenesis. They compact sperm DNA into a highly condensed, stable and inactive complex. The chain is Sperm protamine P1 (PRM1) from Antechinomys laniger (Eastern jerboa marsupial).